We begin with the raw amino-acid sequence, 156 residues long: Small ribosomal subunit protein uS7 (156 aa).

It belongs to the universal ribosomal protein uS7 family. As to quaternary structure, part of the 30S ribosomal subunit. Contacts proteins S9 and S11.

Its function is as follows. One of the primary rRNA binding proteins, it binds directly to 16S rRNA where it nucleates assembly of the head domain of the 30S subunit. Is located at the subunit interface close to the decoding center, probably blocks exit of the E-site tRNA. The chain is Small ribosomal subunit protein uS7 from Klebsiella pneumoniae subsp. pneumoniae (strain ATCC 700721 / MGH 78578).